We begin with the raw amino-acid sequence, 152 residues long: Ribonuclease pancreatic gamma-type (152 aa).

Positions 1-25 are cleaved as a signal peptide; it reads MGLEKSLFLFSLLVLVLGWVQPSLG. Substrate is bound by residues K35 and R38. H40 functions as the Proton acceptor in the catalytic mechanism. 4 disulfides stabilise this stretch: C54-C112, C68-C123, C86-C138, and C93-C100. Substrate-binding positions include 69 to 73, K94, and R113; that span reads KSMNT. The Proton donor role is filled by H147.

Belongs to the pancreatic ribonuclease family. Monomer.

The protein localises to the secreted. It catalyses the reaction an [RNA] containing cytidine + H2O = an [RNA]-3'-cytidine-3'-phosphate + a 5'-hydroxy-ribonucleotide-3'-[RNA].. The enzyme catalyses an [RNA] containing uridine + H2O = an [RNA]-3'-uridine-3'-phosphate + a 5'-hydroxy-ribonucleotide-3'-[RNA].. Endonuclease that catalyzes the cleavage of RNA on the 3' side of pyrimidine nucleotides. Acts on single-stranded and double-stranded RNA. The polypeptide is Ribonuclease pancreatic gamma-type (Rattus norvegicus (Rat)).